We begin with the raw amino-acid sequence, 126 residues long: Small ribosomal subunit protein uS11 (126 aa).

Belongs to the universal ribosomal protein uS11 family. Part of the 30S ribosomal subunit.

In terms of biological role, located on the platform of the 30S subunit. This is Small ribosomal subunit protein uS11 from Methanosarcina barkeri (strain Fusaro / DSM 804).